The chain runs to 1375 residues: Patatin-like phospholipase domain-containing protein 6 (1375 aa).

The tract at residues 1 to 20 is disordered; the sequence is MEAPLQTGMMGTSSHGLATN. Topologically, residues 1-59 are lumenal; that stretch reads MEAPLQTGMMGTSSHGLATNSSGAKVAERDGFQDVLAPGEGSAGRICGAQPVPFVPQVL. The segment covering 9–20 has biased composition (polar residues); sequence MMGTSSHGLATN. A glycan (N-linked (GlcNAc...) asparagine) is linked at Asn20. Residues 60 to 80 form a helical membrane-spanning segment; the sequence is GVMIGAGVAVVVTAVLILLVV. The Cytoplasmic portion of the chain corresponds to 81–1375; sequence RRLRVPKTPA…QEPPGSATDA (1295 aa). 195–322 contributes to the a nucleoside 3',5'-cyclic phosphate binding site; sequence VLGHFEKPLF…VRVVQIIMVR (128 aa). Disordered regions lie at residues 352 to 436 and 449 to 472; these read FPSP…RSDF and LQEEASGGSLAAPARTPTQEPREQ. Ser354 is modified (phosphoserine). Polar residues predominate over residues 359–376; the sequence is TRTSPVRGSKRMVSTSAT. At Thr361 the chain carries Phosphothreonine. A phosphoserine mark is found at Ser362 and Ser372. The span at 384-398 shows a compositional bias: pro residues; the sequence is GRPPDPTGAPLPGPT. A Phosphoserine modification is found at Ser420. The residue at position 464 (Thr464) is a Phosphothreonine. Residues 511–633 and 629–749 contribute to the a nucleoside 3',5'-cyclic phosphate site; these read ELAK…VAAR and TVAA…LSQK. The PNPLA domain maps to 981–1147; it reads LVLGGGGARG…INNLPADIAR (167 aa). The GXGXXG motif lies at 985 to 990; it reads GGGARG. Residues 1012–1016 carry the GXSXG motif; it reads GTSIG. The active-site Nucleophile is Ser1014. The active-site Proton acceptor is the Asp1134. Residues 1134–1136 carry the DGA/G motif; the sequence is DGG. Positions 1306 to 1375 are disordered; it reads SYVSDGCADG…QEPPGSATDA (70 aa). Acidic residues predominate over residues 1313–1329; sequence ADGEESDCLTEYEEDAG.

It belongs to the NTE family. Glycosylated. As to expression, expressed in brain, placenta, kidney, neuron and skeletal muscle. Expressed in the developing eye, pituitary and brain.

It localises to the endoplasmic reticulum membrane. It carries out the reaction a 1-acyl-sn-glycero-3-phosphocholine + H2O = sn-glycerol 3-phosphocholine + a fatty acid + H(+). The enzyme catalyses 1-(9Z-octadecenoyl)-sn-glycero-3-phosphocholine + H2O = sn-glycerol 3-phosphocholine + (9Z)-octadecenoate + H(+). The catalysed reaction is 1-hexadecanoylglycerol + H2O = glycerol + hexadecanoate + H(+). It catalyses the reaction 2-hexadecanoylglycerol + H2O = glycerol + hexadecanoate + H(+). It carries out the reaction 1-(9Z-octadecenoyl)-glycerol + H2O = glycerol + (9Z)-octadecenoate + H(+). The enzyme catalyses 2-(9Z-octadecenoyl)-glycerol + H2O = glycerol + (9Z)-octadecenoate + H(+). The catalysed reaction is 2-(5Z,8Z,11Z,14Z-eicosatetraenoyl)-glycerol + H2O = glycerol + (5Z,8Z,11Z,14Z)-eicosatetraenoate + H(+). It catalyses the reaction 1-hexadecanoyl-sn-glycero-3-phosphate + H2O = sn-glycerol 3-phosphate + hexadecanoate + H(+). It carries out the reaction 1-hexadecanoyl-sn-glycero-3-phosphocholine + H2O = sn-glycerol 3-phosphocholine + hexadecanoate + H(+). Inhibited by a series a OPs such as mipafox (MPX), phenyl saligenin phosphate (PSP), phenyl dipentyl phosphinate (PDPP), diisopropyl fluorophosphate and paraoxon. In terms of biological role, phospholipase B that deacylates intracellular phosphatidylcholine (PtdCho), generating glycerophosphocholine (GroPtdCho). This deacylation occurs at both sn-2 and sn-1 positions of PtdCho. Catalyzes the hydrolysis of several naturally occurring membrane-associated lipids. Hydrolyzes lysophospholipids and monoacylglycerols, preferring the 1-acyl to the 2-acyl isomer. Does not catalyze hydrolysis of di- or triacylglycerols or fatty acid amides. The protein is Patatin-like phospholipase domain-containing protein 6 of Homo sapiens (Human).